The primary structure comprises 293 residues: Ribosomal RNA small subunit methyltransferase H (293 aa).

Residues 32–34 (GGH), Asp51, Phe78, Asp99, and Gln106 contribute to the S-adenosyl-L-methionine site. Residues 272 to 293 (SDEEIKENPASRSAKLRVGRRI) form a disordered region.

This sequence belongs to the methyltransferase superfamily. RsmH family.

It is found in the cytoplasm. It carries out the reaction cytidine(1402) in 16S rRNA + S-adenosyl-L-methionine = N(4)-methylcytidine(1402) in 16S rRNA + S-adenosyl-L-homocysteine + H(+). In terms of biological role, specifically methylates the N4 position of cytidine in position 1402 (C1402) of 16S rRNA. This is Ribosomal RNA small subunit methyltransferase H from Sulfurihydrogenibium sp. (strain YO3AOP1).